Consider the following 830-residue polypeptide: uncharacterized protein (830 aa).

3 disordered regions span residues 1-28, 70-147, and 186-210; these read MGVQLKLDPNSKNWLRQPDQQPIQDSIC, RRAN…GNFA, and AASPTVSFSPASTSENLTPTSSKSL. Residues 10–27 are compositionally biased toward polar residues; sequence NSKNWLRQPDQQPIQDSI. Composition is skewed to low complexity over residues 100 to 130 and 186 to 199; these read QKSSNSRKSIRSQSRSRSSSVGSDSQASIQS and AASPTVSFSPASTS. Polar residues predominate over residues 200–210; that stretch reads ENLTPTSSKSL. Transmembrane regions (helical) follow at residues 505–525, 529–549, 551–571, 584–604, 622–642, 659–679, 691–711, 715–735, 740–760, and 802–822; these read WLVAFMHGVASASILPVVYGG, DMLIGFVLGLLLGIFRVYINP, FFLFDSLFEVIISIILSFLGR, FCFAALVEGAITLILPGYVVF, MLYAVIFSLFLSFGITIGSAL, IIAVSPYWYILLIPIFTLSLL, IQMFVACCGYVVYYFSSLHFG, ISSAIGSFAVGCLGNMYSHFI, FAVVLPAIFVLVPSGFAAQGG, and IAIGIAIGFLASSLTVYPFFG.

This sequence belongs to the ThrE exporter (TC 2.A.79) family.

The protein localises to the cell membrane. The protein resides in the cell tip. This is an uncharacterized protein from Schizosaccharomyces pombe (strain 972 / ATCC 24843) (Fission yeast).